A 37-amino-acid chain; its full sequence is Diptericin (37 aa).

The interval 1–37 (DLHIPPPDNKINWPQLSGGGGGSPKTGYDININAQQK) is disordered.

This sequence belongs to the attacin/sarcotoxin-2 family. In terms of tissue distribution, synthesized by the fat body and secreted into the hemolymph.

It is found in the secreted. In terms of biological role, acute phase protein with antibacterial activity against the Gram-negative bacteria E.coli (MIC=6.25 ug/ml) and S.sonnei (MIC=12.5 ug/ml). Lacks antibacterial activity against the Gram-negative bacteria P.vulgaris, P.rettgeri and P.aeruginosa, and against the Gram-positive bacteria B.subtilis, S.aureus, M.luteus, B.megaterium, C.bovis and E.cloacae. The sequence is that of Diptericin from Sarcophaga peregrina (Flesh fly).